The primary structure comprises 176 residues: MALWRAYQRALAAHPWKVQVLTAGSLMGVGDMISQQLVERRGLQQHQAGRTLTMVSLGCGFVGPVVGGWYKVLDHLIPGTTKVHALKKMLLDQGGFAPCFLGCFLPLVGILNGMSAQDNWAKLKRDYPDALITNYYLWPAVQLANFYLVPLHYRLAVVQCVAIVWNSYLSWKAHQF.

4 helical membrane-spanning segments follow: residues valine 18–valine 38, threonine 53–leucine 73, glycine 94–methionine 114, and leucine 131–leucine 151.

It belongs to the peroxisomal membrane protein PXMP2/4 family. High levels in heart, kidney, and brain, intermediate levels in testis, and low levels in liver and spleen.

It localises to the mitochondrion inner membrane. Non-selective channel that modulates the membrane potential under normal conditions and oxidative stress, and is involved in mitochondrial homeostasis. Involved in mitochondrial deoxynucleoside triphosphates (dNTP) pool homeostasis and mitochondrial DNA (mtDNA) maintenance. May be involved in the regulation of reactive oxygen species metabolism and the control of oxidative phosphorylation. The chain is Mitochondrial inner membrane protein Mpv17 from Mus musculus (Mouse).